We begin with the raw amino-acid sequence, 96 residues long: Small ribosomal subunit protein bS6 (96 aa).

It belongs to the bacterial ribosomal protein bS6 family.

Functionally, binds together with bS18 to 16S ribosomal RNA. The polypeptide is Small ribosomal subunit protein bS6 (Bacillus cereus (strain G9842)).